The chain runs to 445 residues: Xylose isomerase (445 aa).

Catalysis depends on residues H107 and D110. Mg(2+) contacts are provided by E238, E274, H277, D302, D313, D315, and D345.

The protein belongs to the xylose isomerase family. Homotetramer. The cofactor is Mg(2+).

Its subcellular location is the cytoplasm. It carries out the reaction alpha-D-xylose = alpha-D-xylulofuranose. This is Xylose isomerase (xylA) from Bacillus spizizenii (strain ATCC 23059 / NRRL B-14472 / W23) (Bacillus subtilis subsp. spizizenii).